The primary structure comprises 1079 residues: Lon protease homolog, mitochondrial (1079 aa).

Residues 1–60 (MLRPRTYVRKLAWRCPRKSQLGLRLATSVSSHKSLPLPMNFDISHSQSAFRAYQDIIHRN) constitute a mitochondrion transit peptide. The segment covering 61–116 (KSVGDDEPSQRSENENNPSESDKDSNQDPETPKKDKESENDKEPEKEKDIENDNKV) has biased composition (basic and acidic residues). Disordered regions lie at residues 61-158 (KSVG…VDPV) and 262-285 (LTTP…ESFP). A compositionally biased stretch (polar residues) spans 117–131 (SSESNENVTLASSNT). The span at 132 to 143 (GGAAPPNGNNNG) shows a compositional bias: low complexity. In terms of domain architecture, Lon N-terminal spans 165–391 (LLAIPMKDRP…RALELLKVEL (227 aa)). Basic and acidic residues predominate over residues 262-281 (LTTPSSEKEAKSEEPSKEDA). 543-550 (GPPGTGKT) lines the ATP pocket. Positions 756–765 (ALDSSKEKEG) are enriched in basic and acidic residues. Residues 756–832 (ALDSSKEKEG…SEEDQQPEPK (77 aa)) are disordered. The segment covering 768-779 (ASSEEANVNSES) has biased composition (low complexity). The segment covering 780-802 (TKSNTSQAEPVAESSTDISTKSK) has biased composition (polar residues). Residues 803-818 (VASEKIETKEKKETNK) are compositionally biased toward basic and acidic residues. The Lon proteolytic domain occupies 865-1053 (FPPPGVATGL…QEVFDKIFPN (189 aa)). Active-site residues include S959 and K1002.

Belongs to the peptidase S16 family. In terms of assembly, homohexamer or homoheptamer. Organized in a ring with a central cavity.

It is found in the mitochondrion matrix. It catalyses the reaction Hydrolysis of proteins in presence of ATP.. ATP-dependent serine protease that mediates the selective degradation of misfolded, unassembled or oxidatively damaged polypeptides as well as certain short-lived regulatory proteins in the mitochondrial matrix. May also have a chaperone function in the assembly of inner membrane protein complexes. Participates in the regulation of mitochondrial gene expression and in the maintenance of the integrity of the mitochondrial genome. Binds to mitochondrial DNA in a site-specific manner. In Debaryomyces hansenii (strain ATCC 36239 / CBS 767 / BCRC 21394 / JCM 1990 / NBRC 0083 / IGC 2968) (Yeast), this protein is Lon protease homolog, mitochondrial.